The following is a 291-amino-acid chain: HTH-type transcriptional regulator DgcR (291 aa).

An HTH lysR-type domain is found at 1-58; sequence MRLRHIEVFHAIYTTGSITNAAKALHVSQPSVSKVLSHAEMQLGFKLFERVKGRLIPT. Residues 18-37 constitute a DNA-binding region (H-T-H motif); it reads ITNAAKALHVSQPSVSKVLS.

Belongs to the LysR transcriptional regulatory family.

In terms of biological role, transcriptional regulator that positively regulates the expression of the D-Glu gene cluster (DGC). The cluster includes dgcN and dgcA, which are involved in a deamination-independent D-glutamate degradation pathway, dgcR itself, dgcT, dgcP and dgcH. Acts by binding the consensus sequence upstream of dgcR, dgcT, dgcP and dgcH. This is HTH-type transcriptional regulator DgcR from Pseudoalteromonas sp.